Consider the following 99-residue polypeptide: Putative endopeptidase RzpR (99 aa).

The sequence is that of Putative endopeptidase RzpR (rzpR) from Escherichia coli (strain K12).